We begin with the raw amino-acid sequence, 237 residues long: Ribonuclease PH (237 aa).

Phosphate contacts are provided by residues R86 and 124-126 (GTR).

It belongs to the RNase PH family. Homohexameric ring arranged as a trimer of dimers.

It catalyses the reaction tRNA(n+1) + phosphate = tRNA(n) + a ribonucleoside 5'-diphosphate. Its function is as follows. Phosphorolytic 3'-5' exoribonuclease that plays an important role in tRNA 3'-end maturation. Removes nucleotide residues following the 3'-CCA terminus of tRNAs; can also add nucleotides to the ends of RNA molecules by using nucleoside diphosphates as substrates, but this may not be physiologically important. Probably plays a role in initiation of 16S rRNA degradation (leading to ribosome degradation) during starvation. This chain is Ribonuclease PH, found in Shewanella oneidensis (strain ATCC 700550 / JCM 31522 / CIP 106686 / LMG 19005 / NCIMB 14063 / MR-1).